Consider the following 428-residue polypeptide: Tyrosine--tRNA ligase (428 aa).

Tyrosine 41 provides a ligand contact to L-tyrosine. Residues 46–55 carry the 'HIGH' region motif; that stretch reads PTADSLHLGH. The L-tyrosine site is built by tyrosine 179 and glutamine 183. Positions 239-243 match the 'KMSKS' region motif; it reads KFGKT. Position 242 (lysine 242) interacts with ATP. The 58-residue stretch at 361–418 folds into the S4 RNA-binding domain; that stretch reads TDLMQALVDAELQPSRGQARKTIASNAVTINGEKQSDPEYIFNDEDRLFGRYTLLRRG.

This sequence belongs to the class-I aminoacyl-tRNA synthetase family. TyrS type 1 subfamily. As to quaternary structure, homodimer.

The protein localises to the cytoplasm. The catalysed reaction is tRNA(Tyr) + L-tyrosine + ATP = L-tyrosyl-tRNA(Tyr) + AMP + diphosphate + H(+). Functionally, catalyzes the attachment of tyrosine to tRNA(Tyr) in a two-step reaction: tyrosine is first activated by ATP to form Tyr-AMP and then transferred to the acceptor end of tRNA(Tyr). The sequence is that of Tyrosine--tRNA ligase from Salmonella arizonae (strain ATCC BAA-731 / CDC346-86 / RSK2980).